Here is a 339-residue protein sequence, read N- to C-terminus: Casein kinase II subunit alpha' (339 aa).

A Protein kinase domain is found at 50 to 334 (YEIINKIGRG…AKEAMDHKFF (285 aa)). ATP contacts are provided by residues 56–64 (IGRGKYSEV) and K79. D167 acts as the Proton acceptor in catalysis.

It belongs to the protein kinase superfamily. Ser/Thr protein kinase family. CK2 subfamily. As to quaternary structure, tetramer composed of an alpha chain, an alpha', one beta chain and one beta' chain. Interacts with FACT subunits POB3 and SPT16. Interacts with NAP1. Interacts with YTA7.

The enzyme catalyses L-seryl-[protein] + ATP = O-phospho-L-seryl-[protein] + ADP + H(+). It carries out the reaction L-threonyl-[protein] + ATP = O-phospho-L-threonyl-[protein] + ADP + H(+). Its function is as follows. Catalytic subunit of a constitutively active serine/threonine-protein kinase complex that phosphorylates a large number of substrates containing acidic residues C-terminal to the phosphorylated serine or threonine. Phosphorylates YTA7 during S-phase to promote transcription of histones. This chain is Casein kinase II subunit alpha', found in Saccharomyces cerevisiae (strain ATCC 204508 / S288c) (Baker's yeast).